The following is a 275-amino-acid chain: Testis-specific gene 13 protein (275 aa).

A compositionally biased stretch (polar residues) spans 1-20 (MSQKRQTKFQNGKSKTSENS). A disordered region spans residues 1 to 28 (MSQKRQTKFQNGKSKTSENSSAKREKGM).

In terms of tissue distribution, testis-specific.

The chain is Testis-specific gene 13 protein (TSGA13) from Homo sapiens (Human).